Reading from the N-terminus, the 136-residue chain is Small ribosomal subunit protein uS8c (136 aa).

Belongs to the universal ribosomal protein uS8 family. Part of the 30S ribosomal subunit.

The protein localises to the plastid. Its subcellular location is the chloroplast. Functionally, one of the primary rRNA binding proteins, it binds directly to 16S rRNA central domain where it helps coordinate assembly of the platform of the 30S subunit. The protein is Small ribosomal subunit protein uS8c (rps8) of Saccharum hybrid (Sugarcane).